The following is a 102-amino-acid chain: Large ribosomal subunit protein bL21 (102 aa).

Belongs to the bacterial ribosomal protein bL21 family. In terms of assembly, part of the 50S ribosomal subunit. Contacts protein L20.

In terms of biological role, this protein binds to 23S rRNA in the presence of protein L20. The sequence is that of Large ribosomal subunit protein bL21 from Bacillus cytotoxicus (strain DSM 22905 / CIP 110041 / 391-98 / NVH 391-98).